The following is a 528-amino-acid chain: MQNAQIKSSSKGSGIDGTDRNSKDGVEKRPLEDVKQMIDAGTPDVGHKSTVETKPNVGWQASHSNLAALHEKEQKYEMEHHHARHKLHRQVIPDYTSASTAMFSDCMFNAAPDKVRSLSTMKSSGLSPKHPFNVVATFKGPFPQHSVESKPLDGGYSAKDHFPSFKMLQAQQHPAHRHYKDNDKYGLKSPSRSFVKDKKRLVHRFLKSMEPSSSGQSKDSSALAPAFDPILPNVISKPSKRPTHHSHSSDGSSSTQTDISLQSLLYHDLESSPKKHVSPSRPPSVASESSPAVANPIGLSPKDACNASFSQSSSSSLSSSSSSSSSTSFSQSVAVDPLEPPGNITYSSSNLSLNSDELDYYQRHIGLQLQQTEALLKHSLKDEVLKDENDLVKNIANFDKIVKELRDLRSRTIGWKELVEEDYLMNLKQDFDKENPESFEARLSDTINTNVAKLQDLEKRMASCKDRLASRKEVMRKMESLLSLENSLMISKKNVTFASKYRNEALDIVFLIIIIVICYTFKHLVSHK.

The span at 1-13 (MQNAQIKSSSKGS) shows a compositional bias: low complexity. 4 disordered regions span residues 1–52 (MQNA…STVE), 170–193 (AQQH…PSRS), 230–257 (ILPN…STQT), and 270–334 (ESSP…QSVA). The span at 17-36 (GTDRNSKDGVEKRPLEDVKQ) shows a compositional bias: basic and acidic residues. Composition is skewed to low complexity over residues 283–296 (PSVA…VANP) and 308–332 (SFSQ…FSQS). A helical membrane pass occupies residues 505–521 (ALDIVFLIIIIVICYTF).

As to quaternary structure, interacts with HPH1/FRT1. Phosphorylated by CDC28.

It is found in the endoplasmic reticulum membrane. In terms of biological role, required for growth under high NaCl, alkaline pH and cell wall stress. The chain is Protein HPH2 (FRT2) from Saccharomyces cerevisiae (strain ATCC 204508 / S288c) (Baker's yeast).